Reading from the N-terminus, the 332-residue chain is Putative ketol-acid reductoisomerase 3 (332 aa).

In terms of domain architecture, KARI N-terminal Rossmann spans 1–182; the sequence is MDKTVLDASL…AIPGGIAVIS (182 aa). A KARI C-terminal knotted domain is found at 183-329; it reads SFEEEALLDL…KELYKILRRK (147 aa).

It belongs to the ketol-acid reductoisomerase family.

It carries out the reaction (2R)-2,3-dihydroxy-3-methylbutanoate + NADP(+) = (2S)-2-acetolactate + NADPH + H(+). The catalysed reaction is (2R,3R)-2,3-dihydroxy-3-methylpentanoate + NADP(+) = (S)-2-ethyl-2-hydroxy-3-oxobutanoate + NADPH + H(+). It participates in amino-acid biosynthesis; L-isoleucine biosynthesis; L-isoleucine from 2-oxobutanoate: step 2/4. It functions in the pathway amino-acid biosynthesis; L-valine biosynthesis; L-valine from pyruvate: step 2/4. This Saccharolobus solfataricus (strain ATCC 35092 / DSM 1617 / JCM 11322 / P2) (Sulfolobus solfataricus) protein is Putative ketol-acid reductoisomerase 3 (ilvC3).